The following is a 421-amino-acid chain: Vinorine synthase (421 aa).

Active-site proton acceptor residues include His-160 and Asp-362.

Belongs to the plant acyltransferase family. In terms of assembly, monomer. In terms of tissue distribution, mainly expressed in roots and, to a lower level, in leaves.

It carries out the reaction 16-epivellosimine + acetyl-CoA = vinorine + CoA. The protein operates within alkaloid biosynthesis; ajmaline biosynthesis. Complete inhibition by 4-(2-aminoethyl)-benzenesulfonyl fluoride (AEBSF), N-tosyl-L-phenylalanine chloromethylketone (TPCK), Hg(2+) and diethyl-pyrocarbonate (DEPC). 50% inhibition by N-(N-(L-3-trans-carboxirane-2-carbonyl)-L-leucyl)-agmanitine (E-64), N-alpha-p-tosyl-L-lysine chloromethylketone (TLCK) and phenylmethylsulfonyl fluoride (PMSF). Acetyltransferase involved in the biosynthesis of ajmaline-type monoterpenoid indole alkaloids (MIAs) natural products, important plant-derived pharmaceuticals used in the therapy of heart disorders. Catalyzes the conversion of 16-epivellosimine to vinorine, precursor of vomilenine, an intermediate chemical in the biosynthesis of ajmaline. Acts on gardneral, but not on polyneuridine aldehyde or N-methylgardneral. This is Vinorine synthase from Rauvolfia serpentina (Serpentine wood).